The following is a 655-amino-acid chain: Sphingomyelin phosphodiesterase 3 (655 aa).

The Cytoplasmic segment spans residues 1-10; the sequence is MVLYTTPFPN. The segment at residues 11 to 31 is an intramembrane region (helical); the sequence is SCLSALHAVSWALIFPCYWLV. Residues 32–64 are Cytoplasmic-facing; it reads DRLVASFIPTTYEKRQRADDPCYLQLFCTVLFT. S-palmitoyl cysteine attachment occurs at residues cysteine 53 and cysteine 59. Residues 65–85 constitute an intramembrane region (helical); the sequence is PVYLALLVAALPFAFLGFIFW. The Cytoplasmic segment spans residues 86–655; it reads SPLQSARRPY…LMVSAGEEEA (570 aa). Position 178 is a phosphoserine (serine 178). Disordered stretches follow at residues 209-237 and 250-320; these read VEYK…DGSL and GGRA…SNSK. Over residues 211 to 221 the composition is skewed to basic and acidic residues; sequence YKGDGGRHPSD. At serine 289 the chain carries Phosphoserine. Glutamate 362 is a binding site for Mg(2+). Residues cysteine 395 and cysteine 396 are each lipidated (S-palmitoyl cysteine). Histidine 639 (proton acceptor) is an active-site residue.

Belongs to the neutral sphingomyelinase family. Mg(2+) serves as cofactor. Post-translationally, palmitoylated, palmitoylation-deficient proteins are targeted for lysosomal degradation. As to expression, in brain sections, it is restricted to neurons and especially prominent in large cells, including Purkinje cells, pyramidal cells, neurons of the dentate gyrus granular layer, and neurons in the pontine nuclei. Also present in the hypothalamic nuclei, neurons in the piriform cortex, and nuclei of the brainstem (at protein level). Mainly expressed in brain and jejunum. Weakly or not expressed in heart, spleen, lung, liver, kidney and testis.

The protein resides in the golgi apparatus membrane. The protein localises to the cell membrane. It carries out the reaction a sphingomyelin + H2O = phosphocholine + an N-acylsphing-4-enine + H(+). The catalysed reaction is N-(15Z-tetracosenoyl)sphing-4-enine-1-phosphocholine + H2O = N-(15Z-tetracosenoyl)-sphing-4-enine + phosphocholine + H(+). The enzyme catalyses N-(tetracosanoyl)-sphing-4-enine-1-phosphocholine + H2O = N-tetracosanoyl-sphing-4-enine + phosphocholine + H(+). It catalyses the reaction an N-(acyl)-sphingosylphosphocholine + H2O = an N-acyl-sphingoid base + phosphocholine + H(+). It carries out the reaction 1-hexadecanoyl-sn-glycero-3-phosphocholine + H2O = 1-hexadecanoyl-sn-glycerol + phosphocholine + H(+). The catalysed reaction is 1-O-octadecyl-sn-glycero-3-phosphocholine + H2O = 1-O-octadecyl-sn-glycerol + phosphocholine + H(+). The enzyme catalyses a sphingosylphosphocholine + H2O = a sphingoid base + phosphocholine + H(+). It catalyses the reaction N-(hexadecanoyl)-sphing-4-enine-1-phosphocholine + H2O = N-hexadecanoylsphing-4-enine + phosphocholine + H(+). Its pathway is lipid metabolism; sphingolipid metabolism. With respect to regulation, inhibited by nSMase inhibitor GW4869. Binding of anionic phospholipids (APLs) such as phosphatidylserine (PS) and phosphatidic acid (PA) increases enzymatic activity. In terms of biological role, catalyzes the hydrolysis of sphingomyelin to form ceramide and phosphocholine. Ceramide mediates numerous cellular functions, such as apoptosis and growth arrest, and is capable of regulating these 2 cellular events independently. Also hydrolyzes sphingosylphosphocholine. Binds to anionic phospholipids (APLs) such as phosphatidylserine (PS) and phosphatidic acid (PA) that modulate enzymatic activity and subcellular location. Regulates the cell cycle by acting as a growth suppressor in confluent cells. Acts as a regulator of postnatal development and participates in bone and dentin mineralization. May be involved in IL-1-beta-induced JNK activation in hepatocytes. May act as a mediator in transcriptional regulation of NOS2/iNOS via the NF-kappa-B activation under inflammatory conditions. The protein is Sphingomyelin phosphodiesterase 3 of Rattus norvegicus (Rat).